A 242-amino-acid chain; its full sequence is Large ribosomal subunit protein uL1 (242 aa).

Belongs to the universal ribosomal protein uL1 family. In terms of assembly, part of the 50S ribosomal subunit.

Binds directly to 23S rRNA. The L1 stalk is quite mobile in the ribosome, and is involved in E site tRNA release. Its function is as follows. Protein L1 is also a translational repressor protein, it controls the translation of the L11 operon by binding to its mRNA. This chain is Large ribosomal subunit protein uL1, found in Dictyoglomus thermophilum (strain ATCC 35947 / DSM 3960 / H-6-12).